Reading from the N-terminus, the 485-residue chain is Glutamyl-tRNA(Gln) amidotransferase subunit A (485 aa).

Active-site charge relay system residues include lysine 78 and serine 153. Serine 177 serves as the catalytic Acyl-ester intermediate.

Belongs to the amidase family. GatA subfamily. In terms of assembly, heterotrimer of A, B and C subunits.

The catalysed reaction is L-glutamyl-tRNA(Gln) + L-glutamine + ATP + H2O = L-glutaminyl-tRNA(Gln) + L-glutamate + ADP + phosphate + H(+). In terms of biological role, allows the formation of correctly charged Gln-tRNA(Gln) through the transamidation of misacylated Glu-tRNA(Gln) in organisms which lack glutaminyl-tRNA synthetase. The reaction takes place in the presence of glutamine and ATP through an activated gamma-phospho-Glu-tRNA(Gln). This chain is Glutamyl-tRNA(Gln) amidotransferase subunit A, found in Desulfotalea psychrophila (strain LSv54 / DSM 12343).